Reading from the N-terminus, the 346-residue chain is Inositol 2-dehydrogenase (346 aa).

Belongs to the Gfo/Idh/MocA family. In terms of assembly, homotetramer.

It catalyses the reaction myo-inositol + NAD(+) = scyllo-inosose + NADH + H(+). In terms of biological role, involved in the oxidation of myo-inositol (MI) to 2-keto-myo-inositol (2KMI or 2-inosose). The polypeptide is Inositol 2-dehydrogenase (Rhodococcus erythropolis (strain PR4 / NBRC 100887)).